The following is a 754-amino-acid chain: 5-methyltetrahydropteroyltriglutamate--homocysteine methyltransferase (754 aa).

5-methyltetrahydropteroyltri-L-glutamate-binding positions include 17–20 (RELK) and Lys-117. L-homocysteine contacts are provided by residues 431–433 (IGS) and Glu-484. Residues 431-433 (IGS) and Glu-484 each bind L-methionine. Residues 515–516 (RC) and Trp-561 each bind 5-methyltetrahydropteroyltri-L-glutamate. Asp-599 contacts L-homocysteine. Asp-599 serves as a coordination point for L-methionine. Residue Glu-605 coordinates 5-methyltetrahydropteroyltri-L-glutamate. Zn(2+) is bound by residues His-641, Cys-643, and Glu-665. Residue His-694 is the Proton donor of the active site. Zn(2+) is bound at residue Cys-726.

Belongs to the vitamin-B12 independent methionine synthase family. Requires Zn(2+) as cofactor.

It catalyses the reaction 5-methyltetrahydropteroyltri-L-glutamate + L-homocysteine = tetrahydropteroyltri-L-glutamate + L-methionine. The protein operates within amino-acid biosynthesis; L-methionine biosynthesis via de novo pathway; L-methionine from L-homocysteine (MetE route): step 1/1. Its function is as follows. Catalyzes the transfer of a methyl group from 5-methyltetrahydrofolate to homocysteine resulting in methionine formation. The sequence is that of 5-methyltetrahydropteroyltriglutamate--homocysteine methyltransferase from Salmonella choleraesuis (strain SC-B67).